The sequence spans 271 residues: Putative F-box protein L165 (271 aa).

The F-box domain maps to 4 to 49 (ICELFDDVILEIMNLLSDTDKINFMFCCSRFYYFIDLVYYNDIYDY). A disordered region spans residues 251–271 (NIPKIVPKNTHYRNSSKKYRY). Positions 260 to 271 (THYRNSSKKYRY) are enriched in basic residues.

This is Putative F-box protein L165 from Acanthamoeba polyphaga mimivirus (APMV).